The following is a 182-amino-acid chain: Putative adenylate kinase (182 aa).

ATP contacts are provided by glycine 10, glycine 12, lysine 13, threonine 14, and serine 15. Positions 30–53 are NMP; sequence HLNEMIKEEHLYTEVDEVRDAVIA. Residues 104–114 are LID; that stretch reads ARGYSEEKIRE. ATP-binding residues include arginine 105 and lysine 143.

It belongs to the adenylate kinase family. AK6 subfamily. As to quaternary structure, interacts with uS11. Not a structural component of 40S pre-ribosomes, but transiently interacts with them by binding to uS11.

The enzyme catalyses AMP + ATP = 2 ADP. The catalysed reaction is ATP + H2O = ADP + phosphate + H(+). Functionally, broad-specificity nucleoside monophosphate (NMP) kinase that catalyzes the reversible transfer of the terminal phosphate group between nucleoside triphosphates and monophosphates. Also has ATPase activity. Involved in the late maturation steps of the 30S ribosomal particles, specifically 16S rRNA maturation. While NMP activity is not required for ribosome maturation, ATPase activity is. Associates transiently with small ribosomal subunit protein uS11. ATP hydrolysis breaks the interaction with uS11. May temporarily remove uS11 from the ribosome to enable a conformational change of the ribosomal RNA that is needed for the final maturation step of the small ribosomal subunit. This Methanosarcina barkeri (strain Fusaro / DSM 804) protein is Putative adenylate kinase.